The primary structure comprises 456 residues: Equilibrative nucleoside transporter 1 (456 aa).

The Cytoplasmic portion of the chain corresponds to T2 to K12. A helical transmembrane segment spans residues A13 to W29. The Extracellular segment spans residues N30 to N82. N48 is a glycosylation site (N-linked (GlcNAc...) asparagine). The chain crosses the membrane as a helical span at residues V83–P107. At Q108–R111 the chain is on the cytoplasmic side. Residues I112–V130 form a helical membrane-spanning segment. Residues K131–P138 are Extracellular-facing. The chain crosses the membrane as a helical span at residues F139 to L157. The Cytoplasmic portion of the chain corresponds to Q158–A174. A helical membrane pass occupies residues P175 to S199. Residues E200–F206 lie on the Extracellular side of the membrane. Residues G207–P227 form a helical membrane-spanning segment. Residues R228 to V291 lie on the Cytoplasmic side of the membrane. Residues S254, S269, and S273 each carry the phosphoserine modification. Basic and acidic residues predominate over residues S254–S266. The interval S254–T276 is disordered. A helical membrane pass occupies residues L292–T311. At V312–T323 the chain is on the extracellular side. Residues W324–W342 traverse the membrane as a helical segment. Residues L343–R359 are Cytoplasmic-facing. Residues W360–C378 traverse the membrane as a helical segment. Topologically, residues N379–D393 are extracellular. A helical membrane pass occupies residues A394 to L413. At C414–G431 the chain is on the cytoplasmic side. The chain crosses the membrane as a helical span at residues A432–F452. At R453 to V456 the chain is on the extracellular side.

This sequence belongs to the SLC29A/ENT transporter (TC 2.A.57) family. As to quaternary structure, identified in a complex with STOM. Post-translationally, glycosylated. In terms of tissue distribution, expressed in testis at the blood-testis barrier (at protein level). Detected in erythrocytes (at protein level). Expressed at relatively high levels in cerebral cortex, particularly the frontal and parietal lobes, and the thalamus and basal ganglia (at protein level). In the midbrain expressed at moderate levels, whereas in the other areas of the brainstem, namely medulla and pons, cerebellum and the hippocampus expressed at lower amounts when compared to the other brain regions (at protein level). Expressed in Langerhans cells and lymphocytes in the pancreas (at protein level). Expressed in kidney, in polarized renal epithelial cells. Expressed in adipose tissues. Expressed in placenta. Expressed in small intestine.

It is found in the basolateral cell membrane. The protein localises to the apical cell membrane. It localises to the cell membrane. The catalysed reaction is adenosine(in) = adenosine(out). It catalyses the reaction guanosine(in) = guanosine(out). It carries out the reaction inosine(in) = inosine(out). The enzyme catalyses uridine(out) = uridine(in). The catalysed reaction is thymidine(in) = thymidine(out). It catalyses the reaction cytidine(in) = cytidine(out). It carries out the reaction adenine(out) = adenine(in). The enzyme catalyses guanine(out) = guanine(in). The catalysed reaction is thymine(out) = thymine(in). It catalyses the reaction uracil(in) = uracil(out). It carries out the reaction hypoxanthine(out) = hypoxanthine(in). With respect to regulation, transporter activity is sensitive to low concentrations of the inhibitor nitrobenzylmercaptopurine riboside (NBMPR). Inhibited by dilazep. Inhibited by dipyridamole. Inhibited by hypoxanthine. Inhibited by azidothymidine (AZT). Inhibited by dideoxycytidine (ddC). Inhibited by dideoxyinosine (ddI). Inhibited by draflazine. Inhibited by soluflazine. Inhibited by cladribine. Inhibited by capecitabine. Inhibited by clofarabine. Inhibited by ribavirin. Modestly inhibited by acyclovir. Modestly inhibited by 5-fluorouracil. Uniporter involved in the facilitative transport of nucleosides and nucleobases, and contributes to maintaining their cellular homeostasis. Functions as a Na(+)-independent transporter. Involved in the transport of nucleosides such as adenosine, guanosine, inosine, uridine, thymidine and cytidine. Also transports purine nucleobases (hypoxanthine, adenine, guanine) and pyrimidine nucleobases (thymine, uracil). Mediates basolateral nucleoside uptake into Sertoli cells, thereby regulating the transport of nucleosides in testis across the blood-testis barrier. Regulates inosine levels in brown adipocytes tissues (BAT) and extracellular inosine levels, which controls BAT-dependent energy expenditure. This Homo sapiens (Human) protein is Equilibrative nucleoside transporter 1.